Reading from the N-terminus, the 334-residue chain is Type IV inositol polyphosphate 5-phosphatase 11 (334 aa).

Catalytic regions lie at residues 206–222 (DLTV…QDVS) and 282–297 (KIRV…FKIQ).

This sequence belongs to the inositol polyphosphate 5-phosphatase family. As to expression, expressed ubiquitously.

Its subcellular location is the cell membrane. The enzyme catalyses a 1,2-diacyl-sn-glycero-3-phospho-(1D-myo-inositol-4,5-bisphosphate) + H2O = a 1,2-diacyl-sn-glycero-3-phospho-(1D-myo-inositol 4-phosphate) + phosphate. It carries out the reaction a 1,2-diacyl-sn-glycero-3-phospho-(1D-myo-inositol-3,4,5-trisphosphate) + H2O = a 1,2-diacyl-sn-glycero-3-phospho-(1D-myo-inositol-3,4-bisphosphate) + phosphate. Functionally, has phosphatase activity toward PtdIns(4,5)P2, and in vitro toward PtdIns(3,5)P2 and PtdIns(3,4,5)P3. Cannot dephosphorylate PtdIns(5)P, Ins(1,4,5)P3 and Ins(1,3,4,5)P4. The protein is Type IV inositol polyphosphate 5-phosphatase 11 of Arabidopsis thaliana (Mouse-ear cress).